A 201-amino-acid polypeptide reads, in one-letter code: 3-isopropylmalate dehydratase small subunit (201 aa).

The protein belongs to the LeuD family. LeuD type 1 subfamily. In terms of assembly, heterodimer of LeuC and LeuD.

It catalyses the reaction (2R,3S)-3-isopropylmalate = (2S)-2-isopropylmalate. The protein operates within amino-acid biosynthesis; L-leucine biosynthesis; L-leucine from 3-methyl-2-oxobutanoate: step 2/4. Functionally, catalyzes the isomerization between 2-isopropylmalate and 3-isopropylmalate, via the formation of 2-isopropylmaleate. This Allorhizobium ampelinum (strain ATCC BAA-846 / DSM 112012 / S4) (Agrobacterium vitis (strain S4)) protein is 3-isopropylmalate dehydratase small subunit.